Consider the following 337-residue polypeptide: Hsp90 co-chaperone Cdc37-like 1 (337 aa).

Pro residues predominate over residues 1–11 (MEQPWPPPGPW). The interval 1–40 (MEQPWPPPGPWSLPRAEGEAEEESDFDVFPSSPRCPQLPG) is disordered. Positions 2–171 (EQPWPPPGPW…YEQKIRHFGM (170 aa)) are self-association. Residues S32 and S88 each carry the phosphoserine modification. The stretch at 84 to 122 (HNSESLDQEHAKAQTAVSELRQREEEWRQKEEALVQREK) forms a coiled coil. A self-association and interaction with Hsp90 region spans residues 147-277 (KDTEDEDKSE…SRVRLYSQSQ (131 aa)). The segment at 267-337 (KSRVRLYSQS…DDEPKMMDTV (71 aa)) is interaction with Hsp70. The interval 278–337 (SFQPMTVQNHVPHSGVGSIGLLESLPQNPDYLQYSISTALCSLNSVVHKEDDEPKMMDTV) is required for interaction with STIP1.

Belongs to the CDC37 family. In terms of assembly, self-associates. Forms complexes with Hsp70 and Hsp90. Interacts with CDC37, FKBP4, PPID and STIP1. In terms of tissue distribution, expressed in brain, heart, kidney, liver, placenta and skeletal muscle.

It localises to the cytoplasm. Co-chaperone that binds to numerous proteins and promotes their interaction with Hsp70 and Hsp90. The chain is Hsp90 co-chaperone Cdc37-like 1 (CDC37L1) from Homo sapiens (Human).